Consider the following 382-residue polypeptide: Chaperone protein DnaJ (382 aa).

The J domain occupies 5-70; it reads DYYDLLGLSK…DKRAAYDRYG (66 aa). The CR-type zinc-finger motif lies at 138–216; sequence GTKVPINYVT…CSGSGRVRDE (79 aa). Cys151, Cys154, Cys168, Cys171, Cys190, Cys193, Cys204, and Cys207 together coordinate Zn(2+). 4 CXXCXGXG motif repeats span residues 151–158, 168–175, 190–197, and 204–211; these read CSSCSGSG, CNTCHGAG, CHVCNGEG, and CKKCSGSG.

It belongs to the DnaJ family. As to quaternary structure, homodimer. Requires Zn(2+) as cofactor.

It is found in the cytoplasm. In terms of biological role, participates actively in the response to hyperosmotic and heat shock by preventing the aggregation of stress-denatured proteins and by disaggregating proteins, also in an autonomous, DnaK-independent fashion. Unfolded proteins bind initially to DnaJ; upon interaction with the DnaJ-bound protein, DnaK hydrolyzes its bound ATP, resulting in the formation of a stable complex. GrpE releases ADP from DnaK; ATP binding to DnaK triggers the release of the substrate protein, thus completing the reaction cycle. Several rounds of ATP-dependent interactions between DnaJ, DnaK and GrpE are required for fully efficient folding. Also involved, together with DnaK and GrpE, in the DNA replication of plasmids through activation of initiation proteins. In Ehrlichia ruminantium (strain Welgevonden), this protein is Chaperone protein DnaJ.